We begin with the raw amino-acid sequence, 291 residues long: Small ribosomal subunit biogenesis GTPase RsgA 2 (291 aa).

Positions 63 to 221 (ENALVRPPVA…VADTPGFSSI (159 aa)) constitute a CP-type G domain. Residues 112-115 (SKMD) and 164-172 (GQSGVGKST) each bind GTP. The Zn(2+) site is built by cysteine 245, cysteine 250, histidine 252, and cysteine 258.

It belongs to the TRAFAC class YlqF/YawG GTPase family. RsgA subfamily. In terms of assembly, monomer. Associates with 30S ribosomal subunit, binds 16S rRNA. The cofactor is Zn(2+).

It localises to the cytoplasm. In terms of biological role, one of several proteins that assist in the late maturation steps of the functional core of the 30S ribosomal subunit. Helps release RbfA from mature subunits. May play a role in the assembly of ribosomal proteins into the subunit. Circularly permuted GTPase that catalyzes slow GTP hydrolysis, GTPase activity is stimulated by the 30S ribosomal subunit. The chain is Small ribosomal subunit biogenesis GTPase RsgA 2 from Listeria monocytogenes serovar 1/2a (strain ATCC BAA-679 / EGD-e).